We begin with the raw amino-acid sequence, 158 residues long: MTQFTHINASGEANMVDVSAKAETVREARAEAFVHMAPETLQLIVSGQHHKGDVFATARIAGIQAAKKTWDLIPLCHPLLLSKVEVQLEAIEAENKVRIESVCKLAGKTGVEMEALTAASVAALTIYDMCKAVQKDMVIGQVRLLEKTGGKSGHFKAE.

Substrate contacts are provided by residues 75–77 (LCH) and 113–114 (ME). Asp128 is a catalytic residue.

This sequence belongs to the MoaC family. In terms of assembly, homohexamer; trimer of dimers.

The enzyme catalyses (8S)-3',8-cyclo-7,8-dihydroguanosine 5'-triphosphate = cyclic pyranopterin phosphate + diphosphate. It participates in cofactor biosynthesis; molybdopterin biosynthesis. In terms of biological role, catalyzes the conversion of (8S)-3',8-cyclo-7,8-dihydroguanosine 5'-triphosphate to cyclic pyranopterin monophosphate (cPMP). The sequence is that of Cyclic pyranopterin monophosphate synthase from Vibrio campbellii (strain ATCC BAA-1116).